The following is a 356-amino-acid chain: L-Ala-D/L-Glu epimerase (356 aa).

161 to 163 (KVK) contributes to the substrate binding site. Mg(2+) contacts are provided by Asp191, Glu219, and Asp244. Residues Lys268 and 320-322 (DLD) each bind substrate.

It belongs to the mandelate racemase/muconate lactonizing enzyme family. The cofactor is Mg(2+).

The catalysed reaction is L-alanyl-L-glutamate = L-alanyl-D-glutamate. Functionally, dipeptide epimerase with a preference for substrates containing a Glu residue in the second position. Catalyzes the epimerization of L-Ala-L-Glu, L-Ser-L-Glu, L-Thr-L-Glu, L-Val-L-Glu, L-Gly-L-Glu and L-Thr-L-Glu (in vitro). May play a role in the metabolism of the murein peptide, of which L-Ala-D-Glu is a component. In Francisella tularensis subsp. novicida (strain U112), this protein is L-Ala-D/L-Glu epimerase.